A 330-amino-acid polypeptide reads, in one-letter code: Carbonic anhydrase (330 aa).

The tract at residues Met1–Ala109 is chloroplast transit peptide-like.

It belongs to the beta-class carbonic anhydrase family.

The protein resides in the cytoplasm. The enzyme catalyses hydrogencarbonate + H(+) = CO2 + H2O. Reversible hydration of carbon dioxide. This Flaveria brownii (Brown's yellowtops) protein is Carbonic anhydrase.